The following is a 204-amino-acid chain: Ras-related protein RabQ (204 aa).

12–19 lines the GTP pocket; the sequence is GPPFVGKS. The short motif at 34 to 42 is the Effector region element; that stretch reads MDTTIGVEF. Residues 60-64 and 118-121 contribute to the GTP site; these read DTAGQ and NKCD. Residues cysteine 202 and cysteine 203 are each lipidated (S-geranylgeranyl cysteine).

This sequence belongs to the small GTPase superfamily. Rab family.

It localises to the cell membrane. The protein is Ras-related protein RabQ (rabQ) of Dictyostelium discoideum (Social amoeba).